A 452-amino-acid chain; its full sequence is GTPase Der (452 aa).

EngA-type G domains follow at residues 9–170 (KIIA…PEED) and 185–362 (LQIV…KTWN). GTP-binding positions include 15–22 (GRPNVGKS), 62–66 (DTPGF), 124–127 (NKCE), 191–198 (GRPNAGKS), 238–242 (DTAGL), and 303–306 (NKWD). The KH-like domain occupies 363-448 (KKITTSKLNE…PIRFNYIKTK (86 aa)).

The protein belongs to the TRAFAC class TrmE-Era-EngA-EngB-Septin-like GTPase superfamily. EngA (Der) GTPase family. As to quaternary structure, associates with the 50S ribosomal subunit.

GTPase that plays an essential role in the late steps of ribosome biogenesis. This is GTPase Der from Rickettsia bellii (strain OSU 85-389).